The sequence spans 629 residues: MTSCVHLGIVASQSKKMSLAKRFAQLRKASPLFSLRGVYFSAASYDYREKLSRNVLLDLKLDDAVDLFGEMVQSRPLPSIVEFNKLLSAIAKMNKFDLVISLGERMQNLRISYDLYSYNILINCFCRRSQLPLALAVLGKMMKLGYEPDIVTLSSLLNGYCHGKRISEAVALVDQMFVMEYQPNTVTFNTLIHGLFLHNKASEAVALIDRMVARGCQPDLFTYGTVVNGLCKRGDIDLALSLLKKMEKGKIEADVVIYTTIIDALCNYKNVNDALNLFTEMDNKGIRPNVVTYNSLIRCLCNYGRWSDASRLLSDMIERKINPNVVTFSALIDAFVKEGKLVEAEKLYDEMIKRSIDPDIFTYSSLINGFCMHDRLDEAKHMFELMISKDCFPNVVTYNTLIKGFCKAKRVEEGMELFREMSQRGLVGNTVTYNTLIQGLFQAGDCDMAQKIFKKMVSDGVPPDIITYSILLDGLCKYGKLEKALVVFEYLQKSKMEPDIYTYNIMIEGMCKAGKVEDGWDLFCSLSLKGVKPNVIIYTTMISGFCRKGLKEEADALFREMKEDGTLPNSGTYNTLIRARLRDGDKAASAELIKEMRSCGFVGDASTISMVINMLHDGRLEKSYLEMLS.

A chloroplast-targeting transit peptide spans 1–41 (MTSCVHLGIVASQSKKMSLAKRFAQLRKASPLFSLRGVYFS). PPR repeat units lie at residues 79-113 (SIVEFNKLLSAIAKMNKFDLVISLGERMQNLRISY), 114-148 (DLYSYNILINCFCRRSQLPLALAVLGKMMKLGYEP), 149-183 (DIVTLSSLLNGYCHGKRISEAVALVDQMFVMEYQP), 184-218 (NTVTFNTLIHGLFLHNKASEAVALIDRMVARGCQP), 219-253 (DLFTYGTVVNGLCKRGDIDLALSLLKKMEKGKIEA), 254-288 (DVVIYTTIIDALCNYKNVNDALNLFTEMDNKGIRP), 289-323 (NVVTYNSLIRCLCNYGRWSDASRLLSDMIERKINP), 324-358 (NVVTFSALIDAFVKEGKLVEAEKLYDEMIKRSIDP), 359-393 (DIFTYSSLINGFCMHDRLDEAKHMFELMISKDCFP), 394-428 (NVVTYNTLIKGFCKAKRVEEGMELFREMSQRGLVG), 429-463 (NTVTYNTLIQGLFQAGDCDMAQKIFKKMVSDGVPP), 464-498 (DIITYSILLDGLCKYGKLEKALVVFEYLQKSKMEP), 499-533 (DIYTYNIMIEGMCKAGKVEDGWDLFCSLSLKGVKP), 534-568 (NVIIYTTMISGFCRKGLKEEADALFREMKEDGTLP), and 569-603 (NSGTYNTLIRARLRDGDKAASAELIKEMRSCGFVG).

It belongs to the PPR family. P subfamily.

It localises to the plastid. It is found in the chloroplast. The protein is Pentatricopeptide repeat-containing protein At1g62930, chloroplastic of Arabidopsis thaliana (Mouse-ear cress).